We begin with the raw amino-acid sequence, 486 residues long: Maternal protein exuperantia (486 aa).

Disordered stretches follow at residues 202-233 (NARVDNDNEADSNSSSADKHVKNGLQKERDEF) and 386-477 (STIR…ISLP). The span at 218-233 (ADKHVKNGLQKERDEF) shows a compositional bias: basic and acidic residues. Residues 387 to 397 (TIRRRNKRNTP) show a composition bias toward basic residues. 2 stretches are compositionally biased toward polar residues: residues 420–437 (KSQSVSSVPDSTTKTPSP) and 464–476 (SALNNTAPASISL).

In terms of biological role, ensures the proper localization of the mRNA of the bicoid gene to the anterior regions of the oocyte thus playing a fundamental role in the establishment of the polarity of the oocyte. May bind the bcd mRNA. This chain is Maternal protein exuperantia (exu), found in Drosophila virilis (Fruit fly).